A 379-amino-acid polypeptide reads, in one-letter code: DNA-directed RNA polymerase subunit Rpo1C (379 aa).

This sequence belongs to the RNA polymerase beta' chain family. As to quaternary structure, part of the RNA polymerase complex.

It localises to the cytoplasm. It carries out the reaction RNA(n) + a ribonucleoside 5'-triphosphate = RNA(n+1) + diphosphate. Its function is as follows. DNA-dependent RNA polymerase (RNAP) catalyzes the transcription of DNA into RNA using the four ribonucleoside triphosphates as substrates. Forms part of the jaw domain. This is DNA-directed RNA polymerase subunit Rpo1C from Pyrobaculum aerophilum (strain ATCC 51768 / DSM 7523 / JCM 9630 / CIP 104966 / NBRC 100827 / IM2).